A 721-amino-acid chain; its full sequence is Penicillin-binding protein activator LpoA (721 aa).

A signal peptide spans 1-26 (MVPLTFLRTKASRSLPIMLAALIFAG). Cysteine 27 carries N-palmitoyl cysteine lipidation. A lipid anchor (S-diacylglycerol cysteine) is attached at cysteine 27. A compositionally biased stretch (polar residues) spans 316-330 (TSDLTSAQAPAQGTM). Residues 316–393 (TSDLTSAQAP…PAAQPQAVAA (78 aa)) are disordered. Over residues 331–393 (QNPVTAPTTP…PAAQPQAVAA (63 aa)) the composition is skewed to low complexity.

This sequence belongs to the LpoA family. As to quaternary structure, interacts with PBP1a.

It is found in the cell outer membrane. In terms of biological role, regulator of peptidoglycan synthesis that is essential for the function of penicillin-binding protein 1A (PBP1a). The protein is Penicillin-binding protein activator LpoA of Enterobacter sp. (strain 638).